The chain runs to 506 residues: ATP synthase subunit alpha (506 aa).

169–176 (GDRQTGKT) serves as a coordination point for ATP.

It belongs to the ATPase alpha/beta chains family. In terms of assembly, F-type ATPases have 2 components, CF(1) - the catalytic core - and CF(0) - the membrane proton channel. CF(1) has five subunits: alpha(3), beta(3), gamma(1), delta(1), epsilon(1). CF(0) has three main subunits: a(1), b(2) and c(9-12). The alpha and beta chains form an alternating ring which encloses part of the gamma chain. CF(1) is attached to CF(0) by a central stalk formed by the gamma and epsilon chains, while a peripheral stalk is formed by the delta and b chains.

The protein resides in the cell membrane. The catalysed reaction is ATP + H2O + 4 H(+)(in) = ADP + phosphate + 5 H(+)(out). In terms of biological role, produces ATP from ADP in the presence of a proton gradient across the membrane. The alpha chain is a regulatory subunit. This chain is ATP synthase subunit alpha, found in Acetivibrio thermocellus (strain ATCC 27405 / DSM 1237 / JCM 9322 / NBRC 103400 / NCIMB 10682 / NRRL B-4536 / VPI 7372) (Clostridium thermocellum).